The sequence spans 418 residues: Metacaspase-2 (418 aa).

The disordered stretch occupies residues Pro68–His113. Residues Pro70–Pro80 show a composition bias toward low complexity. Residues His103–Val112 show a composition bias toward pro residues. Catalysis depends on residues His200 and Cys256. Residues Pro385 to Asn406 form a disordered region. Residues Gln393 to Ala405 are compositionally biased toward polar residues.

It belongs to the peptidase C14B family.

Functionally, acts as a negative regulator of oxidative stress cell death and hypersensitive cell death response mediated by immune response. Acts via indirect or direct regulation of AMC1 at postranscriptional level. This Arabidopsis thaliana (Mouse-ear cress) protein is Metacaspase-2 (AMC2).